Reading from the N-terminus, the 376-residue chain is MFPRPLTPLAAPNGAEPLGRALRRAPLGRARAGLGGPPLLLPSMLMFAVIVASSGLLLMIERGILAEMKPLPLHPPGREGTAWRGKAPKPGGLSLRAGDADLQVRQDVRNRTLRAVCGQPGMPRDPWDLPVGQRRTLLRHILVSDRYRFLYCYVPKVACSNWKRVMKVLAGVLDSVDVRLKMDHRSDLVFLADLRPEEIRYRLQHYFKFLFVREPLERLLSAYRNKFGEIREYQQRYGAEIVRRYRAGAGPSPAGDDVTFPEFLRYLVDEDPERMNEHWMPVYHLCQPCAVHYDFVGSYERLEADANQVLEWVRAPPHVRFPARQAWYRPASPESLHYHLCSAPRALLQDVLPKYILDFSLFAYPLPNVTKEACQQ.

The Cytoplasmic segment spans residues 1–39; sequence MFPRPLTPLAAPNGAEPLGRALRRAPLGRARAGLGGPPL. A helical; Signal-anchor for type II membrane protein membrane pass occupies residues 40–60; that stretch reads LLPSMLMFAVIVASSGLLLMI. Topologically, residues 61 to 376 are lumenal; that stretch reads ERGILAEMKP…PNVTKEACQQ (316 aa). N-linked (GlcNAc...) asparagine glycosylation occurs at asparagine 110. 3'-phosphoadenylyl sulfate contacts are provided by residues 155-161 and 213-221; these read PKVACSN and REPLERLLS. The N-linked (GlcNAc...) asparagine glycan is linked to asparagine 368.

It belongs to the sulfotransferase 2 family. Widely expressed. Expressed at high level in pituitary gland, placenta, uterus and thyroid.

It localises to the golgi apparatus membrane. It carries out the reaction dermatan + n 3'-phosphoadenylyl sulfate = dermatan 4'-sulfate + n adenosine 3',5'-bisphosphate + n H(+). Catalyzes the transfer of sulfate to position 4 of the N-acetylgalactosamine (GalNAc) residue of dermatan sulfate. Plays a pivotal role in the formation of 4-0-sulfated IdoA blocks in dermatan sulfate. Transfers sulfate to the C-4 hydroxyl of beta1,4-linked GalNAc that is substituted with an alpha-linked iduronic acid (IdoUA) at the C-3 hydroxyl. Transfers sulfate more efficiently to GalNAc residues in -IdoUA-GalNAc-IdoUA- than in -GlcUA-GalNAc-GlcUA-sequences. Has preference for partially desulfated dermatan sulfate. Addition of sulfate to GalNAc may occur immediately after epimerization of GlcUA to IdoUA. Appears to have an important role in the formation of the cerebellar neural network during postnatal brain development. This Homo sapiens (Human) protein is Carbohydrate sulfotransferase 14 (CHST14).